The chain runs to 309 residues: MRTVTVGTRGSALALAQTRWVVARLKEEWPDTDFRIQTISTKGDRDRAALQSLAQKGDKGFWVKEIEDALLAGRIDIAVHSLKDLPTEQPEGLEIASIPKRVDARDVLIGKDGMKRLEDLPSGARVGTSSVRRKAFLRAYRPDLQILDLRGNIDTRLAALGTPDYDAIVLAAAGLIRTEMRHRIDEFIDPDLLLPAPGQGALALETRADDDLSIEVVYAIHDHATDDRVTAEREFLAGLGAGCMAPVGAHATLKDGVLTLEGWVGALDGSQVIRATTSGDPAECADLGAELAADMLGQGAQQLIEAAHR.

C243 bears the S-(dipyrrolylmethanemethyl)cysteine mark.

This sequence belongs to the HMBS family. As to quaternary structure, monomer. Dipyrromethane serves as cofactor.

It catalyses the reaction 4 porphobilinogen + H2O = hydroxymethylbilane + 4 NH4(+). Its pathway is porphyrin-containing compound metabolism; protoporphyrin-IX biosynthesis; coproporphyrinogen-III from 5-aminolevulinate: step 2/4. Its function is as follows. Tetrapolymerization of the monopyrrole PBG into the hydroxymethylbilane pre-uroporphyrinogen in several discrete steps. This Deinococcus geothermalis (strain DSM 11300 / CIP 105573 / AG-3a) protein is Porphobilinogen deaminase.